The following is a 519-amino-acid chain: MTTFWSQTINRQNGGVATATATATATAATTTPTAGGTGAGTTTSTKGMITPTPFNIDINNDLNDFDGKFIETFKPDLELQKKYRSFIQREGALSFLRTEITQSMSKRDICVLILNLGYPKKAVEDYPILTLKELAYILLKLMLTDSAQLEPKVEIDENDNKNDGTNNSDIDSDIDSNSDMDSQSESGELDDAMDVDDSLSENEDEYDQDMSTTTLKRTINMTPFKYKLPDLISDLSRAKKIMVVTGAGISTSLGIPDFRSFKGLYNQLSKLNLSDPQKVFDLQTFMREPGLFYTIAHLVLPPDGKFSLLHAFLKLLQDKHKLLRNYTQNIDNLEQRAGLKSEKLVQCHGSFAKAKCVSCQGIFAGEKIYNHIRRKQVPRCAICWKNTKQAPIHFGAIKPTITFFGEDLPERFHTLMDKDLQQIDLFLVIGTSLKVEPVASIIERVPYKVPKILINKDPIPNRGFNLQLLGLCDDVVSYLCKCLKWDIPHADFNNNDEFKLSKLKNGDWEIVKKSTSTKK.

The interval 154-212 (EIDENDNKNDGTNNSDIDSDIDSNSDMDSQSESGELDDAMDVDDSLSENEDEYDQDMST) is disordered. Residues 187–208 (GELDDAMDVDDSLSENEDEYDQ) show a composition bias toward acidic residues. A Deacetylase sirtuin-type domain is found at 221-486 (MTPFKYKLPD…SYLCKCLKWD (266 aa)). NAD(+) contacts are provided by residues 246 to 265 (GAGISTSLGIPDFRSFKGLY) and 328 to 331 (QNID). Catalysis depends on His348, which acts as the Proton acceptor. Residues Cys356, Cys359, Cys380, and Cys383 each contribute to the Zn(2+) site. NAD(+) is bound by residues 430 to 432 (GTS), 455 to 457 (NKD), and Cys472.

Belongs to the sirtuin family. Class I subfamily. In terms of assembly, interacts with HXK1. The cofactor is Zn(2+).

It localises to the nucleus. It catalyses the reaction N(6)-acetyl-L-lysyl-[protein] + NAD(+) + H2O = 2''-O-acetyl-ADP-D-ribose + nicotinamide + L-lysyl-[protein]. In terms of biological role, NAD-dependent deacetylase. Heterochromatin component that silences transcription at silent mating loci, telomeres and the ribosomal DNA, and that also suppresses recombination in the rDNA and extends replicative life span. It acts as a NAD-dependent histone deacetylase, which deacetylates 'Lys-9' and 'Lys-14' of Histone H3 and 'Lys-16' of Histone H4. Functions in the distribution of oxidatively damaged proteins during cell division. Mediates phenotypic switching. The protein is NAD-dependent histone deacetylase SIR2 of Candida albicans (strain SC5314 / ATCC MYA-2876) (Yeast).